The primary structure comprises 536 residues: Alpha-1,3-mannosyl-glycoprotein 4-beta-N-acetylglucosaminyltransferase A (536 aa).

Residues 1 to 6 are Cytoplasmic-facing; sequence MRLRNG. Residues 7–27 form a helical; Signal-anchor for type II membrane protein membrane-spanning segment; sequence TVATALVFITTFLSLSWYTAW. Positions 28 to 54 form a coiled coil; sequence QNGKEKLMAYQREFHALKERLRIAEHR. Residues 28–536 are Lumenal-facing; the sequence is QNGKEKLMAY…EIHIKRNPAD (509 aa). N-linked (GlcNAc...) asparagine glycosylation is found at N77 and N458.

Belongs to the glycosyltransferase 54 family. It depends on a divalent metal cation as a cofactor. In terms of processing, N-glycosylated.

It is found in the golgi apparatus membrane. Its subcellular location is the secreted. It catalyses the reaction N(4)-{beta-D-GlcNAc-(1-&gt;2)-alpha-D-Man-(1-&gt;3)-[beta-D-GlcNAc-(1-&gt;2)-alpha-D-Man-(1-&gt;6)]-beta-D-Man-(1-&gt;4)-beta-D-GlcNAc-(1-&gt;4)-beta-D-GlcNAc}-L-asparaginyl-[protein] + UDP-N-acetyl-alpha-D-glucosamine = N(4)-{beta-D-GlcNAc-(1-&gt;2)-[beta-D-GlcNAc-(1-&gt;4)]-alpha-D-Man-(1-&gt;3)-[beta-D-GlcNAc-(1-&gt;2)-alpha-D-Man-(1-&gt;6)]-beta-D-Man-(1-&gt;4)-beta-D-GlcNAc-(1-&gt;4)-beta-D-GlcNAc}-L-asparaginyl-[protein] + UDP + H(+). The catalysed reaction is an N(4)-{beta-D-GlcNAc-(1-&gt;2)-alpha-D-Man-(1-&gt;3)-[alpha-D-Man-(1-&gt;6)]-beta-D-Man-(1-&gt;4)-beta-D-GlcNAc-(1-&gt;4)-beta-D-GlcNAc}-L-asparaginyl-[protein] + UDP-N-acetyl-alpha-D-glucosamine = an N(4)-{beta-D-GlcNAc-(1-&gt;2)-[beta-D-GlcNAc-(1-&gt;4)]-alpha-D-Man-(1-&gt;3)-[alpha-D-Man-(1-&gt;6)]-beta-D-Man-(1-&gt;4)-beta-D-GlcNAc-(1-&gt;4)-beta-D-GlcNAc}-L-asparaginyl-[protein] + UDP + H(+). The enzyme catalyses an N(4)-{beta-D-GlcNAc-(1-&gt;2)-alpha-D-Man-(1-&gt;3)-[beta-D-GlcNAc-(1-&gt;2)-[beta-D-GlcNAc-(1-&gt;6)]-alpha-D-Man-(1-&gt;6)]-beta-D-Man-(1-&gt;4)-beta-D-GlcNAc-(1-&gt;4)-beta-D-GlcNAc}-L-asparaginyl-[protein] + UDP-N-acetyl-alpha-D-glucosamine = an N(4)-{beta-D-GlcNAc-(1-&gt;2)-[beta-D-GlcNAc-(1-&gt;4)]-alpha-D-Man-(1-&gt;3)-[beta-D-GlcNAc-(1-&gt;2)-[beta-D-GlcNAc-(1-&gt;6)]-alpha-D-Man-(1-&gt;6)]-beta-D-Man-(1-&gt;4)-beta-D-GlcNAc-(1-&gt;4)-beta-D-GlcNAc}-L-asparaginyl-[protein] + UDP + H(+). It carries out the reaction an N(4)-{beta-D-GlcNAc-(1-&gt;2)-alpha-D-Man-(1-&gt;3)-[beta-D-GlcNAc-(1-&gt;2)-alpha-D-Man-(1-&gt;6)]-beta-D-Man-(1-&gt;4)-beta-D-GlcNAc-(1-&gt;4)-[alpha-L-Fuc-(1-&gt;6)]-beta-D-GlcNAc}-L-asparaginyl-[protein] + UDP-N-acetyl-alpha-D-glucosamine = N(4)-{beta-D-GlcNAc-(1-&gt;2)-[beta-D-GlcNAc-(1-&gt;4)]-alpha-D-Man-(1-&gt;3)-[beta-D-GlcNAc-(1-&gt;2)-alpha-D-Man-(1-&gt;6)]-beta-D-Man-(1-&gt;4)-beta-D-GlcNAc-(1-&gt;4)-[alpha-L-Fuc-(1-&gt;6)]-beta-D-GlcNAc}-asparaginyl-[protein] + UDP + H(+). It catalyses the reaction an N(4)-{beta-D-GlcNAc-(1-&gt;2)-alpha-D-Man-(1-&gt;3)-[beta-D-Gal-(1-&gt;4)-beta-D-GlcNAc-(1-&gt;2)-alpha-D-Man-(1-&gt;6)]-beta-D-Man-(1-&gt;4)-beta-D-GlcNAc-(1-&gt;4)-beta-D-GlcNAc}-L-asparaginyl-[protein] + UDP-N-acetyl-alpha-D-glucosamine = an N(4)-{beta-D-GlcNAc-(1-&gt;2)-[beta-D-GlcNAc-(1-&gt;4)]-alpha-D-Man-(1-&gt;3)-[beta-D-Gal-(1-&gt;4)-beta-D-GlcNAc-(1-&gt;2)-alpha-D-Man-(1-&gt;6)]-beta-D-Man-(1-&gt;4)-beta-D-GlcNAc-(1-&gt;4)-beta-D-GlcNAc}-L-asparaginyl-[protein] + UDP + H(+). The catalysed reaction is N(4)-{beta-D-GlcNAc-(1-&gt;2)-alpha-D-Man-(1-&gt;3)-[alpha-D-Man-(1-&gt;3)-{alpha-D-Man-(1-&gt;6)}-alpha-D-Man-(1-&gt;6)]-beta-D-Man-(1-&gt;4)-beta-D-GlcNAc-(1-&gt;4)-beta-D-GlcNAc}-asparaginyl-[protein] + UDP-N-acetyl-alpha-D-glucosamine = N(4)-{beta-D-GlcNAc-(1-&gt;2)-[beta-D-GlcNAc-(1-&gt;4)]-alpha-D-Man-(1-&gt;3)-[alpha-D-Man-(1-&gt;3)-{alpha-D-Man-(1-&gt;6)}-alpha-D-Man-(1-&gt;6)]-beta-D-Man-(1-&gt;4)-beta-D-GlcNAc-(1-&gt;4)-beta-D-GlcNAc}-asparaginyl-[protein] + UDP + H(+). The enzyme catalyses N(4)-{beta-D-GlcNAc-(1-&gt;2)-alpha-D-Man-(1-&gt;3)-beta-D-Man-(1-&gt;4)-beta-D-GlcNAc-(1-&gt;4)-beta-D-GlcNAc}-asparaginyl-[protein] + UDP-N-acetyl-alpha-D-glucosamine = N(4)-{beta-D-GlcNAc-(1-&gt;2)-[beta-D-GlcNAc-(1-&gt;4)]-alpha-D-Man-(1-&gt;3)-beta-D-Man-(1-&gt;4)-beta-D-GlcNAc-(1-&gt;4)-beta-D-GlcNAc}-asparaginyl-[protein] + UDP + H(+). Its pathway is protein modification; protein glycosylation. With respect to regulation, inhibited by UDP. Functionally, glycosyltransferase that catalyze the transfer of GlcNAc from UDP-GlcNAc to the GlcNAcbeta1-2Manalpha1-3 arm of the core structure of N-linked glycans through a beta1-4 linkage and participates in the production of tri- and tetra-antennary N-linked sugar chains. Involved in glucose transport by mediating SLC2A2/GLUT2 glycosylation, thereby controlling cell-surface expression of SLC2A2 in pancreatic beta cells. This chain is Alpha-1,3-mannosyl-glycoprotein 4-beta-N-acetylglucosaminyltransferase A, found in Xenopus tropicalis (Western clawed frog).